The primary structure comprises 773 residues: Cytochrome c oxidase subunit 1+2 (773 aa).

A COX1 region spans residues M1–T491. Residues T41 to I61 form a helical membrane-spanning segment. E64 contacts Ca(2+). H85 provides a ligand contact to Fe(II)-heme a. The next 6 helical transmembrane spans lie at L87–L111, L130–A150, V173–L193, L211–A231, L262–I278, and I290–V310. H264 is a binding site for Cu cation. The 1'-histidyl-3'-tyrosine (His-Tyr) cross-link spans H264–Y268. Y268 lines the O2 pocket. H314 and H315 together coordinate Cu cation. The next 2 helical transmembrane spans lie at I335–V355 and M362–L382. Mg(2+)-binding residues include H392 and D393. Transmembrane regions (helical) follow at residues Y396–G416, F444–A464, I483–F503, I555–W575, and G604–I624. H400 provides a ligand contact to heme a3. H402 is a Fe(II)-heme a binding site. The tract at residues A492–K773 is COX2. 4 residues coordinate Cu cation: H709, C744, C748, and H752.

This sequence in the N-terminal section; belongs to the heme-copper respiratory oxidase family. In the C-terminal section; belongs to the cytochrome c oxidase subunit 2 family. As to quaternary structure, component of the cytochrome c oxidase (complex IV, CIV), a multisubunit enzyme composed of a catalytic core of 3 subunits and several supernumerary subunits. The complex exists as a monomer or a dimer and forms supercomplexes (SCs) in the inner mitochondrial membrane with ubiquinol-cytochrome c oxidoreductase (cytochrome b-c1 complex, complex III, CIII). The cofactor is heme. Cu cation serves as cofactor.

Its subcellular location is the mitochondrion inner membrane. The enzyme catalyses 4 Fe(II)-[cytochrome c] + O2 + 8 H(+)(in) = 4 Fe(III)-[cytochrome c] + 2 H2O + 4 H(+)(out). It participates in energy metabolism; oxidative phosphorylation. Functionally, component of the cytochrome c oxidase, the last enzyme in the mitochondrial electron transport chain which drives oxidative phosphorylation. The respiratory chain contains 3 multisubunit complexes succinate dehydrogenase (complex II, CII), ubiquinol-cytochrome c oxidoreductase (cytochrome b-c1 complex, complex III, CIII) and cytochrome c oxidase (complex IV, CIV), that cooperate to transfer electrons derived from NADH and succinate to molecular oxygen, creating an electrochemical gradient over the inner membrane that drives transmembrane transport and the ATP synthase. Cytochrome c oxidase is the component of the respiratory chain that catalyzes the reduction of oxygen to water. Electrons originating from reduced cytochrome c in the intermembrane space (IMS) are transferred via the dinuclear copper A center (CU(A)) of subunit 2 and heme A of subunit 1 to the active site in subunit 1, a binuclear center (BNC) formed by heme A3 and copper B (CU(B)). The BNC reduces molecular oxygen to 2 water molecules using 4 electrons from cytochrome c in the IMS and 4 protons from the mitochondrial matrix. This is Cytochrome c oxidase subunit 1+2 (cox1/2) from Dictyostelium citrinum (Slime mold).